Reading from the N-terminus, the 266-residue chain is tRNA pseudouridine synthase A (266 aa).

D51 acts as the Nucleophile in catalysis. Y106 provides a ligand contact to substrate.

This sequence belongs to the tRNA pseudouridine synthase TruA family.

The enzyme catalyses uridine(38/39/40) in tRNA = pseudouridine(38/39/40) in tRNA. Functionally, formation of pseudouridine at positions 38, 39 and 40 in the anticodon stem and loop of transfer RNAs. This Pyrococcus furiosus (strain ATCC 43587 / DSM 3638 / JCM 8422 / Vc1) protein is tRNA pseudouridine synthase A.